A 650-amino-acid polypeptide reads, in one-letter code: ATP-dependent DNA helicase PIF1 (650 aa).

The interval 14–192 is PINT; that stretch reads MPSSTEAATD…ALEKRPMESQ (179 aa). Residues Ser-40 and Ser-164 each carry the phosphoserine modification. The disordered stretch occupies residues 171–199; the sequence is LQRAAATKAPDSALEKRPMESQTSTEAPR. An ATP-binding site is contributed by 237–244; the sequence is GSAGTGKS. A DNA-binding region spans residues 586 to 605; that stretch reads QAYVALSRARSLQGLRVLDF. The tract at residues 631–650 is disordered; that stretch reads LESQDDEEANSDLENMDPNL. A compositionally biased stretch (acidic residues) spans 633–650; that stretch reads SQDDEEANSDLENMDPNL.

The protein belongs to the helicase family. PIF1 subfamily. As to quaternary structure, monomer. Interacts with telomerase. Mg(2+) is required as a cofactor.

It is found in the nucleus. It localises to the mitochondrion. The enzyme catalyses Couples ATP hydrolysis with the unwinding of duplex DNA at the replication fork by translocating in the 5'-3' direction. This creates two antiparallel DNA single strands (ssDNA). The leading ssDNA polymer is the template for DNA polymerase III holoenzyme which synthesizes a continuous strand.. The catalysed reaction is ATP + H2O = ADP + phosphate + H(+). Its function is as follows. DNA-dependent ATPase and 5'-3' DNA helicase required for the maintenance of both mitochondrial and nuclear genome stability. Efficiently unwinds G-quadruplex (G4) DNA structures and forked RNA-DNA hybrids. Resolves G4 structures, preventing replication pausing and double-strand breaks (DSBs) at G4 motifs. Involved in the maintenance of telomeric DNA. Inhibits telomere elongation, de novo telomere formation and telomere addition to DSBs via catalytic inhibition of telomerase. Reduces the processivity of telomerase by displacing active telomerase from DNA ends. Releases telomerase by unwinding the short telomerase RNA/telomeric DNA hybrid that is the intermediate in the telomerase reaction. Possesses an intrinsic strand annealing activity. The protein is ATP-dependent DNA helicase PIF1 of Mus musculus (Mouse).